A 201-amino-acid chain; its full sequence is Protein GrpE (201 aa).

A disordered region spans residues 1–32; the sequence is MTDRDRQPEDTTAPTGEPVVSKPYIMPDDPEP.

This sequence belongs to the GrpE family. As to quaternary structure, homodimer.

Its subcellular location is the cytoplasm. In terms of biological role, participates actively in the response to hyperosmotic and heat shock by preventing the aggregation of stress-denatured proteins, in association with DnaK and GrpE. It is the nucleotide exchange factor for DnaK and may function as a thermosensor. Unfolded proteins bind initially to DnaJ; upon interaction with the DnaJ-bound protein, DnaK hydrolyzes its bound ATP, resulting in the formation of a stable complex. GrpE releases ADP from DnaK; ATP binding to DnaK triggers the release of the substrate protein, thus completing the reaction cycle. Several rounds of ATP-dependent interactions between DnaJ, DnaK and GrpE are required for fully efficient folding. This chain is Protein GrpE, found in Bradyrhizobium diazoefficiens (strain JCM 10833 / BCRC 13528 / IAM 13628 / NBRC 14792 / USDA 110).